The chain runs to 351 residues: Autoinducer 2 import system permease protein LsrC (351 aa).

Transmembrane regions (helical) follow at residues 14–34 (LLAILTLFALLGIIDRNYFSL), 39–59 (MIFSSAQILILLAIGATLVML), 70–90 (ITGLCAVTVGMALNAGFGLVA), 93–113 (LFALLVGMVAGFFNGILVTWL), 115–135 (IPAIVATLGTLGLYRGLMLLL), 155–175 (ILFSISPIGWLTMLLILAMAW), 213–233 (MNGVMAALAGIVFASQIGFIP), 252–272 (GISLLGGTGTIIGAILGAFLL), and 284–304 (LPAWWNDFIAGLVLLGVLVFD).

Belongs to the binding-protein-dependent transport system permease family. AraH/RbsC subfamily. The complex is composed of two ATP-binding proteins (LsrA), two transmembrane proteins (LsrC and LsrD) and a solute-binding protein (LsrB).

It localises to the cell inner membrane. Functionally, part of the ABC transporter complex LsrABCD involved in autoinducer 2 (AI-2) import. Probably responsible for the translocation of the substrate across the membrane. The polypeptide is Autoinducer 2 import system permease protein LsrC (lsrC) (Yersinia pseudotuberculosis serotype O:3 (strain YPIII)).